Reading from the N-terminus, the 464-residue chain is Chromosomal replication initiator protein DnaA (464 aa).

A domain I, interacts with DnaA modulators region spans residues 1-74 (MDAVGYEVFW…ERKFLELSGH (74 aa)). A domain II region spans residues 74–117 (HPIKLLFAVKKGTPHGNTAPPKHVHTYLEKNSPAEVPSKKSFHP). The interval 118-341 (DLNRDYTFEN…GALTKIIAFI (224 aa)) is domain III, AAA+ region. ATP is bound by residues G162, G164, K165, and T166. The segment at 342–464 (EVSGSITIDI…LKSKVQDSIR (123 aa)) is domain IV, binds dsDNA.

The protein belongs to the DnaA family. In terms of assembly, oligomerizes as a right-handed, spiral filament on DNA at oriC.

It is found in the cytoplasm. Plays an essential role in the initiation and regulation of chromosomal replication. ATP-DnaA binds to the origin of replication (oriC) to initiate formation of the DNA replication initiation complex once per cell cycle. Binds the DnaA box (a 9 base pair repeat at the origin) and separates the double-stranded (ds)DNA. Forms a right-handed helical filament on oriC DNA; dsDNA binds to the exterior of the filament while single-stranded (ss)DNA is stabiized in the filament's interior. The ATP-DnaA-oriC complex binds and stabilizes one strand of the AT-rich DNA unwinding element (DUE), permitting loading of DNA polymerase. After initiation quickly degrades to an ADP-DnaA complex that is not apt for DNA replication. Binds acidic phospholipids. In Treponema pallidum (strain Nichols), this protein is Chromosomal replication initiator protein DnaA.